We begin with the raw amino-acid sequence, 185 residues long: Elongation factor P (185 aa).

Belongs to the elongation factor P family.

It localises to the cytoplasm. The protein operates within protein biosynthesis; polypeptide chain elongation. In terms of biological role, involved in peptide bond synthesis. Stimulates efficient translation and peptide-bond synthesis on native or reconstituted 70S ribosomes in vitro. Probably functions indirectly by altering the affinity of the ribosome for aminoacyl-tRNA, thus increasing their reactivity as acceptors for peptidyl transferase. The sequence is that of Elongation factor P from Rippkaea orientalis (strain PCC 8801 / RF-1) (Cyanothece sp. (strain PCC 8801)).